Here is a 497-residue protein sequence, read N- to C-terminus: Type II secretion system protein E (497 aa).

An ATP-binding site is contributed by 255–262 (GPTGSGKS). Zn(2+)-binding residues include cysteine 388, cysteine 391, cysteine 419, and cysteine 422.

The protein belongs to the GSP E family. Forms homooligomers; most probably hexamers. Interacts with PulL/GspL. Zn(2+) serves as cofactor.

It localises to the cell inner membrane. It carries out the reaction ATP + H2O + cellular proteinSide 1 = ADP + phosphate + cellular proteinSide 2.. Functionally, ATPase component of the type II secretion system required for the energy-dependent secretion of extracellular factors such as proteases and toxins from the periplasm. Acts as a molecular motor to provide the energy that is required for assembly of the pseudopilus and the extrusion of substrates generated in the cytoplasm. The sequence is that of Type II secretion system protein E (pulE) from Klebsiella pneumoniae.